The primary structure comprises 141 residues: Nucleoside diphosphate kinase (141 aa).

K11, F59, R87, T93, R104, and N114 together coordinate ATP. H117 functions as the Pros-phosphohistidine intermediate in the catalytic mechanism.

The protein belongs to the NDK family. In terms of assembly, homotetramer. The cofactor is Mg(2+).

The protein resides in the cytoplasm. It carries out the reaction a 2'-deoxyribonucleoside 5'-diphosphate + ATP = a 2'-deoxyribonucleoside 5'-triphosphate + ADP. The enzyme catalyses a ribonucleoside 5'-diphosphate + ATP = a ribonucleoside 5'-triphosphate + ADP. Major role in the synthesis of nucleoside triphosphates other than ATP. The ATP gamma phosphate is transferred to the NDP beta phosphate via a ping-pong mechanism, using a phosphorylated active-site intermediate. The polypeptide is Nucleoside diphosphate kinase (Cupriavidus necator (strain ATCC 17699 / DSM 428 / KCTC 22496 / NCIMB 10442 / H16 / Stanier 337) (Ralstonia eutropha)).